The sequence spans 304 residues: Acetyl-coenzyme A carboxylase carboxyl transferase subunit beta (304 aa).

One can recognise a CoA carboxyltransferase N-terminal domain in the interval 29–298 (LWSKCESCGA…ASDVSPAAVP (270 aa)). Positions 33, 36, 52, and 55 each coordinate Zn(2+). The C4-type zinc-finger motif lies at 33–55 (CESCGALTYTKDLRANQMVCLEC).

It belongs to the AccD/PCCB family. In terms of assembly, acetyl-CoA carboxylase is a heterohexamer composed of biotin carboxyl carrier protein (AccB), biotin carboxylase (AccC) and two subunits each of ACCase subunit alpha (AccA) and ACCase subunit beta (AccD). Zn(2+) serves as cofactor.

The protein resides in the cytoplasm. The enzyme catalyses N(6)-carboxybiotinyl-L-lysyl-[protein] + acetyl-CoA = N(6)-biotinyl-L-lysyl-[protein] + malonyl-CoA. Its pathway is lipid metabolism; malonyl-CoA biosynthesis; malonyl-CoA from acetyl-CoA: step 1/1. In terms of biological role, component of the acetyl coenzyme A carboxylase (ACC) complex. Biotin carboxylase (BC) catalyzes the carboxylation of biotin on its carrier protein (BCCP) and then the CO(2) group is transferred by the transcarboxylase to acetyl-CoA to form malonyl-CoA. The polypeptide is Acetyl-coenzyme A carboxylase carboxyl transferase subunit beta (Acaryochloris marina (strain MBIC 11017)).